We begin with the raw amino-acid sequence, 245 residues long: Pyridoxine 5'-phosphate synthase (245 aa).

3-amino-2-oxopropyl phosphate is bound at residue N7. 9–10 contributes to the 1-deoxy-D-xylulose 5-phosphate binding site; that stretch reads DH. R18 contacts 3-amino-2-oxopropyl phosphate. The active-site Proton acceptor is H43. Positions 45 and 50 each coordinate 1-deoxy-D-xylulose 5-phosphate. E70 serves as the catalytic Proton acceptor. T100 serves as a coordination point for 1-deoxy-D-xylulose 5-phosphate. Residue H190 is the Proton donor of the active site. Residues G191 and 212–213 contribute to the 3-amino-2-oxopropyl phosphate site; that span reads GH.

The protein belongs to the PNP synthase family. In terms of assembly, homooctamer; tetramer of dimers.

The protein resides in the cytoplasm. The enzyme catalyses 3-amino-2-oxopropyl phosphate + 1-deoxy-D-xylulose 5-phosphate = pyridoxine 5'-phosphate + phosphate + 2 H2O + H(+). It functions in the pathway cofactor biosynthesis; pyridoxine 5'-phosphate biosynthesis; pyridoxine 5'-phosphate from D-erythrose 4-phosphate: step 5/5. Functionally, catalyzes the complicated ring closure reaction between the two acyclic compounds 1-deoxy-D-xylulose-5-phosphate (DXP) and 3-amino-2-oxopropyl phosphate (1-amino-acetone-3-phosphate or AAP) to form pyridoxine 5'-phosphate (PNP) and inorganic phosphate. This is Pyridoxine 5'-phosphate synthase from Prochlorococcus marinus (strain MIT 9303).